The sequence spans 405 residues: MAKGTFERTKPHVNVGTIGHVDHGKTTLTAAITFTAAASDPTIEKLAYDQIDKAPEEKARGITINTAHVEYNTPTRHYSHVDCPGHADYVKNMITGAAQMDGAILVVSSADGPMPQTREHILLARQVGVPYIVVFMNKVDMVDDEELLELVEMEVRELLSKYEFPGDDLPVIKGSALQALEALQANPKTARGEDKWVDRIWELLDAVDSYIPTPERATDKTFLMPVEDVFTITGRGTVATGRVERGVVKVQDEVEIIGLRDTKKTTVTGIEMHRKLLDSGMAGDNVGVLLRGVARDDVERGQVLAKPGSIKPHTKFEASVYVLSKDEGGRHSAFFGGYRPQFYFRTTDVTGVVELPEGVEMVMPGDNITFVVELIKPIAMEEGLRFAIREGGRTVGAGVVAKVLE.

Positions lysine 10–glutamate 215 constitute a tr-type G domain. The tract at residues glycine 19 to threonine 26 is G1. Glycine 19–threonine 26 is a GTP binding site. Residue threonine 26 coordinates Mg(2+). The interval glycine 61 to asparagine 65 is G2. The tract at residues aspartate 82 to glycine 85 is G3. GTP-binding positions include aspartate 82–histidine 86 and asparagine 137–aspartate 140. The tract at residues asparagine 137 to aspartate 140 is G4. The G5 stretch occupies residues serine 175 to leucine 177.

It belongs to the TRAFAC class translation factor GTPase superfamily. Classic translation factor GTPase family. EF-Tu/EF-1A subfamily. Monomer.

The protein localises to the cytoplasm. The catalysed reaction is GTP + H2O = GDP + phosphate + H(+). Its function is as follows. GTP hydrolase that promotes the GTP-dependent binding of aminoacyl-tRNA to the A-site of ribosomes during protein biosynthesis. The chain is Elongation factor Tu from Deinonema sp.